Consider the following 509-residue polypeptide: MGSRLHVQVIHGGPPLPYKDDIRAFGKEYAEQLDAQDPLRRFRDEFIIPSKKDLKRKTLFPNDGMYSCGHPICFANTSCACVHAAETEETSDEKCIYLCGNSLGLQPRSTRKYIDHYLRTWATKGVTGHFVPHDDQLLPPFVDVDEAGAKLMAPIVGALKSEVAVMGTLTANLHLLMASFYRPTPERNKIIIEGKAFPSDHYAVESQIRHHNLDPKDAMVLIEPEDLDRPILDTKYILRVIDENAHSTALILLPAIQFYTGQYFDIQRITAHAQSKGILVGWDCAHAAGNVDLRLHDWNVDFAAWCTYKYLNAGPGGMAALFVHERHGRVDIEQAASGKEAFHPRFSGWWGGDKQTRFLMNNHFVPQQGAAGFQLSNPSVLDMNAVVASLELFNQTSMAEIRKKSLNLTGYLEHLLLRDPQTENSEKRPFSIITPSNPAERGAQLSIRLQPGLLDRVLESLNEDAVIIDERKPDVIRVAPAPLYNTYAEVWRFAQLFHLACDKALCGRK.

Pyridoxal 5'-phosphate-binding positions include Leu-169, Thr-170, 197 to 200 (FPSD), Asp-283, His-286, and Tyr-308. An N6-(pyridoxal phosphate)lysine modification is found at Lys-309. Pyridoxal 5'-phosphate-binding residues include Trp-349 and Asn-377.

Belongs to the kynureninase family. Homodimer. Pyridoxal 5'-phosphate is required as a cofactor.

Its subcellular location is the cytoplasm. The enzyme catalyses L-kynurenine + H2O = anthranilate + L-alanine + H(+). It catalyses the reaction 3-hydroxy-L-kynurenine + H2O = 3-hydroxyanthranilate + L-alanine + H(+). It participates in amino-acid degradation; L-kynurenine degradation; L-alanine and anthranilate from L-kynurenine: step 1/1. The protein operates within cofactor biosynthesis; NAD(+) biosynthesis; quinolinate from L-kynurenine: step 2/3. Functionally, catalyzes the cleavage of L-kynurenine (L-Kyn) and L-3-hydroxykynurenine (L-3OHKyn) into anthranilic acid (AA) and 3-hydroxyanthranilic acid (3-OHAA), respectively. The protein is Kynureninase 1 (bna5-1) of Aspergillus fumigatus (strain CBS 144.89 / FGSC A1163 / CEA10) (Neosartorya fumigata).